Here is a 65-residue protein sequence, read N- to C-terminus: Myosin-11 (65 aa).

The region spanning 1–65 (RSGKLDAFLV…NWQWWRLFTK (65 aa)) is the Myosin motor domain.

Belongs to the TRAFAC class myosin-kinesin ATPase superfamily. Myosin family. In terms of assembly, muscle myosin is a hexameric protein that consists of 2 heavy chain subunits (MHC), 2 alkali light chain subunits (MLC) and 2 regulatory light chain subunits (MLC-2).

The protein resides in the melanosome. Its subcellular location is the cytoplasm. The protein localises to the myofibril. Muscle contraction. This Sus scrofa (Pig) protein is Myosin-11 (MYH11).